The following is a 154-amino-acid chain: Interleukin-2 (154 aa).

Residues 1 to 20 form the signal peptide; the sequence is MYKMQLLCCIALTLALMANG. A glycan (O-linked (GalNAc...) threonine) is linked at Thr23. A disulfide bridge connects residues Cys78 and Cys126.

The protein belongs to the IL-2 family.

Its subcellular location is the secreted. Its function is as follows. Cytokine produced by activated CD4-positive helper T-cells and to a lesser extend activated CD8-positive T-cells and natural killer (NK) cells that plays pivotal roles in the immune response and tolerance. Binds to a receptor complex composed of either the high-affinity trimeric IL-2R (IL2RA/CD25, IL2RB/CD122 and IL2RG/CD132) or the low-affinity dimeric IL-2R (IL2RB and IL2RG). Interaction with the receptor leads to oligomerization and conformation changes in the IL-2R subunits resulting in downstream signaling starting with phosphorylation of JAK1 and JAK3. In turn, JAK1 and JAK3 phosphorylate the receptor to form a docking site leading to the phosphorylation of several substrates including STAT5. This process leads to activation of several pathways including STAT, phosphoinositide-3-kinase/PI3K and mitogen-activated protein kinase/MAPK pathways. Functions as a T-cell growth factor and can increase NK-cell cytolytic activity as well. Promotes strong proliferation of activated B-cells and subsequently immunoglobulin production. Plays a pivotal role in regulating the adaptive immune system by controlling the survival and proliferation of regulatory T-cells, which are required for the maintenance of immune tolerance. Moreover, participates in the differentiation and homeostasis of effector T-cell subsets, including Th1, Th2, Th17 as well as memory CD8-positive T-cells. This Sus scrofa (Pig) protein is Interleukin-2 (IL2).